Reading from the N-terminus, the 254-residue chain is MENIMNNPVIGVVMCRNRLKGHATQTLQEKYLNAIIHAGGLPIALPHALAEPSLLEQLLPKLDGIYLPSSPSNVQPHLYGENGDEPDADPGRDLLSMAIINAALERRIPIFAICRGLQELVVATGGSLHRKLCEQPELLEHREDPELPVEQQYAPSHEVQVEEGGLLSALLPECSNFWVNSLHGQGAKVVSPRLRVEARSPDGLVEAVSVINHPFALGVQWHPEWNSSEYALSRILFEGFITAWQHHIAEKQRL.

The region spanning 16-250 (RNRLKGHATQ…ITAWQHHIAE (235 aa)) is the Glutamine amidotransferase type-1 domain. Cys114 acts as the Nucleophile in catalysis. Active-site residues include His222 and Glu224.

The protein belongs to the peptidase C26 family.

The catalysed reaction is 4-(gamma-L-glutamylamino)butanoate + H2O = 4-aminobutanoate + L-glutamate. Its pathway is amine and polyamine degradation; putrescine degradation; 4-aminobutanoate from putrescine: step 4/4. In terms of biological role, involved in the breakdown of putrescine via hydrolysis of the gamma-glutamyl linkage of gamma-glutamyl-gamma-aminobutyrate. The polypeptide is Gamma-glutamyl-gamma-aminobutyrate hydrolase (puuD) (Shigella flexneri).